A 268-amino-acid chain; its full sequence is 4-hydroxy-tetrahydrodipicolinate reductase (268 aa).

Position 8 to 13 (Gly8 to Met13) interacts with NAD(+). Arg36 provides a ligand contact to NADP(+). Residues Gly99–Thr101 and Ala123–Phe126 contribute to the NAD(+) site. The active-site Proton donor/acceptor is His156. A (S)-2,3,4,5-tetrahydrodipicolinate-binding site is contributed by His157. Lys160 acts as the Proton donor in catalysis. Gly166–Thr167 is a binding site for (S)-2,3,4,5-tetrahydrodipicolinate.

It belongs to the DapB family.

Its subcellular location is the cytoplasm. It carries out the reaction (S)-2,3,4,5-tetrahydrodipicolinate + NAD(+) + H2O = (2S,4S)-4-hydroxy-2,3,4,5-tetrahydrodipicolinate + NADH + H(+). It catalyses the reaction (S)-2,3,4,5-tetrahydrodipicolinate + NADP(+) + H2O = (2S,4S)-4-hydroxy-2,3,4,5-tetrahydrodipicolinate + NADPH + H(+). It functions in the pathway amino-acid biosynthesis; L-lysine biosynthesis via DAP pathway; (S)-tetrahydrodipicolinate from L-aspartate: step 4/4. Catalyzes the conversion of 4-hydroxy-tetrahydrodipicolinate (HTPA) to tetrahydrodipicolinate. In Pseudomonas fluorescens (strain ATCC BAA-477 / NRRL B-23932 / Pf-5), this protein is 4-hydroxy-tetrahydrodipicolinate reductase.